A 609-amino-acid chain; its full sequence is Sterol O-acyltransferase 2 (609 aa).

Over residues 1-15 (MGRTNTSDQLNAISD) the composition is skewed to polar residues. A disordered region spans residues 1–41 (MGRTNTSDQLNAISDKNTKRKSLALDNEYHNNSSSEDDSSK). Helical transmembrane passes span 152–172 (FFGMYVLFWLATAFAMVNNLI), 195–215 (LFKVGLVDLAMYLSTYFAFFV), 229–249 (VGWWLQAAFDGLFLFFWLWIA), 253–273 (CLDFPWIAKVFLVLHSLVFIM), 402–422 (WSYVFGKTFGIFGLIFLMILI), and 451–471 (FLLMDMIPPFLMVYLFTFFLI). The FYXDWWN motif motif lies at 490–496 (FYGPWWS). A run of 2 helical transmembrane segments spans residues 534-554 (AAIITFLLSSLVHELVMYVIF) and 589-609 (IICWFGFISGPSIICTLYLVF). His-546 is an active-site residue.

Belongs to the membrane-bound acyltransferase family. Sterol o-acyltransferase subfamily.

It is found in the endoplasmic reticulum membrane. Inhibited by the protoberberine derivative HWY-289 in a non-competitive manner. Inhibited by miconazole. Not inhibited by CI-976, polyoxin D, amphotericin B or nikkomycin Z. In terms of biological role, sterol O-acyltransferase that catalyzes the formation of stery esters. This Candida albicans (Yeast) protein is Sterol O-acyltransferase 2.